We begin with the raw amino-acid sequence, 312 residues long: uncharacterized protein (312 aa).

Positions 1–28 (MNSADTQEPKSFNHTDMWTAFGTTMSGA) are cleaved as a signal peptide.

Its function is as follows. The FAS-operon encodes genes involved in cytokinin production and in host plant fasciation (leafy gall). This is an uncharacterized protein from Rhodococcoides fascians (Rhodococcus fascians).